A 236-amino-acid polypeptide reads, in one-letter code: MATTEKTKALVLFSGGQDSTVCLASVLARYDEVETVGFDYGQAHAVELGCRAKLRDALTRFPGWGAKLGPDHMIALPELGRISETALTRDVEIEMGENGLPTTFVPGRNLLFFTYAAALGYRRGASVIVGGMCETDYSGYPDCRADTIAALERAICLGMDRAFTLETPLMRIDKAATWALAHELGGDALVDLIIEETHSCYRGDRSKRHDWGYGCGTCPACELRARGYTAYLAGKA.

Position 13–23 (13–23 (FSGGQDSTVCL)) interacts with ATP. Positions 200, 215, 218, and 221 each coordinate Zn(2+).

Belongs to the QueC family. The cofactor is Zn(2+).

The enzyme catalyses 7-carboxy-7-deazaguanine + NH4(+) + ATP = 7-cyano-7-deazaguanine + ADP + phosphate + H2O + H(+). It participates in purine metabolism; 7-cyano-7-deazaguanine biosynthesis. In terms of biological role, catalyzes the ATP-dependent conversion of 7-carboxy-7-deazaguanine (CDG) to 7-cyano-7-deazaguanine (preQ(0)). In Parvibaculum lavamentivorans (strain DS-1 / DSM 13023 / NCIMB 13966), this protein is 7-cyano-7-deazaguanine synthase.